A 109-amino-acid polypeptide reads, in one-letter code: U4-lycotoxin-Ls1b (109 aa).

Residues 1 to 22 form the signal peptide; it reads MKVLVLFSVLFLTLFSYSSTEA. Positions 23–44 are excised as a propeptide; the sequence is IDEFDSDAEDDMLSLMANEQVR. The tract at residues 45-88 is knottin domain; it reads AKACTPRLHDCSHDRHSCCRGELSKDVCYCFYPEGEDKTEVCSC. Intrachain disulfides connect Cys48–Cys63, Cys55–Cys72, Cys62–Cys88, and Cys74–Cys86. Positions 89–108 are linear cationic cytotoxin domain; the sequence is QQPKSHKYIEKVVDKAKTVV.

The protein belongs to the neurotoxin 19 (CSTX) family. 05 (U4-Lctx) subfamily. Expressed by the venom gland.

The protein localises to the secreted. Enhances the high-affinity desensitization of human P2RX3 purinoceptors. The protein is U4-lycotoxin-Ls1b of Lycosa singoriensis (Wolf spider).